Consider the following 236-residue polypeptide: uncharacterized protein (236 aa).

The first 23 residues, 1–23 (MRRILSILVFAIMLAGCSSNAST), serve as a signal peptide directing secretion. The tract at residues 22 to 62 (STEKQHAGGEKTVKAEPQSTSSQKDSTDDYQPNSQVTDDRT) is disordered. Residues 24-35 (EKQHAGGEKTVK) are compositionally biased toward basic and acidic residues.

This is an uncharacterized protein from Bacillus subtilis (strain 168).